The sequence spans 137 residues: uncharacterized protein (137 aa).

A helical membrane pass occupies residues 111-131; the sequence is LAVGVLVGSNLVVGSLVFALL.

Its subcellular location is the membrane. This is an uncharacterized protein from Saccharomyces cerevisiae (strain ATCC 204508 / S288c) (Baker's yeast).